A 198-amino-acid chain; its full sequence is FMN-dependent NADH:quinone oxidoreductase (198 aa).

FMN is bound by residues serine 10, 16–18, 94–97, and 138–141; these read SQS, MYNF, and TRGG.

It belongs to the azoreductase type 1 family. In terms of assembly, homodimer. Requires FMN as cofactor.

It carries out the reaction 2 a quinone + NADH + H(+) = 2 a 1,4-benzosemiquinone + NAD(+). It catalyses the reaction N,N-dimethyl-1,4-phenylenediamine + anthranilate + 2 NAD(+) = 2-(4-dimethylaminophenyl)diazenylbenzoate + 2 NADH + 2 H(+). Its function is as follows. Quinone reductase that provides resistance to thiol-specific stress caused by electrophilic quinones. In terms of biological role, also exhibits azoreductase activity. Catalyzes the reductive cleavage of the azo bond in aromatic azo compounds to the corresponding amines. This is FMN-dependent NADH:quinone oxidoreductase from Shewanella baltica (strain OS195).